The chain runs to 124 residues: Fluoride-specific ion channel FluC (124 aa).

4 consecutive transmembrane segments (helical) span residues 1–21, 36–56, 70–90, and 100–120; these read MLNT…RYGV, TMII…WFVV, TGIL…FLLI, and LYVI…FAII. Na(+) contacts are provided by Gly-74 and Thr-77.

It belongs to the fluoride channel Fluc/FEX (TC 1.A.43) family.

It is found in the cell inner membrane. The catalysed reaction is fluoride(in) = fluoride(out). With respect to regulation, na(+) is not transported, but it plays an essential structural role and its presence is essential for fluoride channel function. In terms of biological role, fluoride-specific ion channel. Important for reducing fluoride concentration in the cell, thus reducing its toxicity. The protein is Fluoride-specific ion channel FluC of Methylobacterium sp. (strain 4-46).